A 202-amino-acid polypeptide reads, in one-letter code: Imidazoleglycerol-phosphate dehydratase (202 aa).

It belongs to the imidazoleglycerol-phosphate dehydratase family.

The protein resides in the cytoplasm. It carries out the reaction D-erythro-1-(imidazol-4-yl)glycerol 3-phosphate = 3-(imidazol-4-yl)-2-oxopropyl phosphate + H2O. Its pathway is amino-acid biosynthesis; L-histidine biosynthesis; L-histidine from 5-phospho-alpha-D-ribose 1-diphosphate: step 6/9. In Corynebacterium glutamicum (strain ATCC 13032 / DSM 20300 / JCM 1318 / BCRC 11384 / CCUG 27702 / LMG 3730 / NBRC 12168 / NCIMB 10025 / NRRL B-2784 / 534), this protein is Imidazoleglycerol-phosphate dehydratase.